A 423-amino-acid polypeptide reads, in one-letter code: Tyrosine--tRNA ligase (423 aa).

Y35 lines the L-tyrosine pocket. Positions 40–49 (PTAPSLHAGH) match the 'HIGH' region motif. 2 residues coordinate L-tyrosine: Y170 and Q174. The short motif at 230–234 (KFGKS) is the 'KMSKS' region element. Residue K233 participates in ATP binding. The S4 RNA-binding domain occupies 355–412 (DLITDLLVATGLSASKGAARRTIAEGGVSVNNMKIDSDEWTPQASDFLHGRWLVLRRG).

It belongs to the class-I aminoacyl-tRNA synthetase family. TyrS type 1 subfamily. Homodimer.

It is found in the cytoplasm. The catalysed reaction is tRNA(Tyr) + L-tyrosine + ATP = L-tyrosyl-tRNA(Tyr) + AMP + diphosphate + H(+). In terms of biological role, catalyzes the attachment of tyrosine to tRNA(Tyr) in a two-step reaction: tyrosine is first activated by ATP to form Tyr-AMP and then transferred to the acceptor end of tRNA(Tyr). This is Tyrosine--tRNA ligase from Mycobacterium sp. (strain KMS).